A 95-amino-acid polypeptide reads, in one-letter code: Large ribosomal subunit protein bL27 (95 aa).

Positions 1-10 are excised as a propeptide; the sequence is MLLTMNLQLF. Residues 12-38 form a disordered region; the sequence is HKKGGGSTSNGRDSESKRLGAKSADGQ.

This sequence belongs to the bacterial ribosomal protein bL27 family. The N-terminus is cleaved by ribosomal processing cysteine protease Prp.

The polypeptide is Large ribosomal subunit protein bL27 (Enterococcus faecalis (strain ATCC 700802 / V583)).